A 207-amino-acid chain; its full sequence is Ribosomal RNA small subunit methyltransferase G (207 aa).

Residues glycine 73, leucine 78, 124–125 (VE), and arginine 139 contribute to the S-adenosyl-L-methionine site.

The protein belongs to the methyltransferase superfamily. RNA methyltransferase RsmG family.

It is found in the cytoplasm. It carries out the reaction guanosine(527) in 16S rRNA + S-adenosyl-L-methionine = N(7)-methylguanosine(527) in 16S rRNA + S-adenosyl-L-homocysteine. Functionally, specifically methylates the N7 position of guanine in position 527 of 16S rRNA. This Salmonella arizonae (strain ATCC BAA-731 / CDC346-86 / RSK2980) protein is Ribosomal RNA small subunit methyltransferase G.